We begin with the raw amino-acid sequence, 328 residues long: MIEKIWSGESPLWRLLLPLSWLYGLVSGAIRLCYKLKLKRAWRAPVPVVVVGNLTAGGNGKTPVVVWLVEQLQQRGIRVGVVSRGYGGKAESYPLLLSADTTTAQAGDEPVLIYQRTGAPVAVSPVRSDAVKAILAQHPDVQIIVTDDGLQHYRLARDVEIVVIDGVRRFGNGWWLPAGSMRERAGRLKSVDAVIVNGGVPRSGEIPMHLLPGQAVNLRTGTRCDVAQLEHVVAIAGIGHPPRFFATLKMCGVQPEKCVPLADHQSLNHADVSALVSAGQTLVMTEKDAVKCRAFAEENWWYLPVDAQLSGDEPAKLLAQLTSLASGH.

ATP is bound at residue 55-62; the sequence is TAGGNGKT.

The protein belongs to the LpxK family.

The enzyme catalyses a lipid A disaccharide + ATP = a lipid IVA + ADP + H(+). Its pathway is glycolipid biosynthesis; lipid IV(A) biosynthesis; lipid IV(A) from (3R)-3-hydroxytetradecanoyl-[acyl-carrier-protein] and UDP-N-acetyl-alpha-D-glucosamine: step 6/6. In terms of biological role, transfers the gamma-phosphate of ATP to the 4'-position of a tetraacyldisaccharide 1-phosphate intermediate (termed DS-1-P) to form tetraacyldisaccharide 1,4'-bis-phosphate (lipid IVA). This is Tetraacyldisaccharide 4'-kinase from Escherichia coli O127:H6 (strain E2348/69 / EPEC).